The chain runs to 635 residues: Cationic amino acid transporter 4 (635 aa).

The next 3 membrane-spanning stretches (helical) occupy residues 42–62, 66–86, and 113–133; these read LTLL…TGTV, MAGP…LLAA, and IWAF…GAAV. Asparagine 146, asparagine 151, and asparagine 195 each carry an N-linked (GlcNAc...) asparagine glycan. A helical membrane pass occupies residues 197 to 217; it reads TFSAISLIVILFIIVLGFILA. Asparagine 221 is a glycosylation site (N-linked (GlcNAc...) asparagine). Helical transmembrane passes span 229–249, 270–290, 318–338, 365–385, and 391–411; these read FAPF…YAFV, MAIA…STVL, GFIV…SNLF, QVPV…ALLL, and VQFL…SIIV. Phosphoserine is present on residues serine 422 and serine 427. The next 4 membrane-spanning stretches (helical) occupy residues 478 to 498, 508 to 528, 539 to 559, and 567 to 587; these read VAWA…VLVF, WGYV…LLVL, TFQI…NTCL, and TWLR…GYGI.

It belongs to the amino acid-polyamine-organocation (APC) superfamily. Cationic amino acid transporter (CAT) (TC 2.A.3.3) family.

It is found in the membrane. In terms of biological role, involved in the transport of the cationic amino acids (arginine, lysine and ornithine). This chain is Cationic amino acid transporter 4 (Slc7a4), found in Mus musculus (Mouse).